The primary structure comprises 320 residues: Biotin synthase (320 aa).

Residues 43–270 (GAVQKSQLLS…KSWVRLSAGR (228 aa)) enclose the Radical SAM core domain. Residues Cys58, Cys62, and Cys65 each coordinate [4Fe-4S] cluster. [2Fe-2S] cluster is bound by residues Cys102, Cys133, Cys193, and Arg265.

The protein belongs to the radical SAM superfamily. Biotin synthase family. As to quaternary structure, homodimer. The cofactor is [4Fe-4S] cluster. [2Fe-2S] cluster is required as a cofactor.

The catalysed reaction is (4R,5S)-dethiobiotin + (sulfur carrier)-SH + 2 reduced [2Fe-2S]-[ferredoxin] + 2 S-adenosyl-L-methionine = (sulfur carrier)-H + biotin + 2 5'-deoxyadenosine + 2 L-methionine + 2 oxidized [2Fe-2S]-[ferredoxin]. The protein operates within cofactor biosynthesis; biotin biosynthesis; biotin from 7,8-diaminononanoate: step 2/2. In terms of biological role, catalyzes the conversion of dethiobiotin (DTB) to biotin by the insertion of a sulfur atom into dethiobiotin via a radical-based mechanism. The chain is Biotin synthase from Hyphomonas neptunium (strain ATCC 15444).